Here is a 341-residue protein sequence, read N- to C-terminus: Glucokinase (341 aa).

7–12 provides a ligand contact to ATP; it reads GDIGGT.

Belongs to the bacterial glucokinase family.

The protein resides in the cytoplasm. It catalyses the reaction D-glucose + ATP = D-glucose 6-phosphate + ADP + H(+). In Nostoc punctiforme (strain ATCC 29133 / PCC 73102), this protein is Glucokinase.